Reading from the N-terminus, the 281-residue chain is Bifunctional N-acyl-homoserine lactone acylase/prephenate dehydratase (281 aa).

One can recognise a Prephenate dehydratase domain in the interval 6 to 181; that stretch reads IIAFQGRPGA…NTTRFYIASR (176 aa). Positions 196-273 constitute an ACT domain; the sequence is TLLFRVNNQP…EQQEILGVYP (78 aa). 4 residues coordinate L-phenylalanine: Ala-207, Leu-208, Asn-221, and Met-222.

In terms of assembly, homodimer.

It catalyses the reaction an N-acyl-L-homoserine lactone + H2O = L-homoserine lactone + a carboxylate. The catalysed reaction is prephenate + H(+) = 3-phenylpyruvate + CO2 + H2O. It participates in amino-acid biosynthesis; L-phenylalanine biosynthesis; phenylpyruvate from prephenate: step 1/1. Its function is as follows. Multifunctional enzyme that acts on N-acyl-homoserine lactones (AHLs), beta-lactam antibiotics and shows prephenate dehydratase activity. Acts as an acylase on AHL and hydrolyzes the amide bond of the acyl side-chain of AHL molecules, releasing homoserine lactone (HSL) and the fatty acid. Can use different 3-oxo-acyl homoserine lactones, such as 3-oxo-decanoyl homoserine lactone, which is the preferred substrate, 3-oxo-octanoyl homoserine lactone, 3-oxo-hexanoyl homoserine lactone and 3-oxo-dodecanoyl homoserine lactone. It can also degrade various beta-lactam antibiotics, including penicillin G, amoxicillin and ampicillin, but not cefotaxime. In addition, it can complement a phenylalanine auxotrophic E.coli mutant, which carries a kanamycin gene inserted into pheA, suggesting that GqqA can also function as a prephenate dehydratase. Involved in bacterial quorum quenching (QQ) and cellulose biofilm formation. This Komagataeibacter europaeus (Gluconacetobacter europaeus) protein is Bifunctional N-acyl-homoserine lactone acylase/prephenate dehydratase.